A 129-amino-acid polypeptide reads, in one-letter code: Small ribosomal subunit protein uS8 (129 aa).

The protein belongs to the universal ribosomal protein uS8 family. Part of the 30S ribosomal subunit.

Functionally, one of the primary rRNA binding proteins, it binds directly to 16S rRNA central domain where it helps coordinate assembly of the platform of the 30S subunit. This is Small ribosomal subunit protein uS8 from Thermoplasma volcanium (strain ATCC 51530 / DSM 4299 / JCM 9571 / NBRC 15438 / GSS1).